A 453-amino-acid polypeptide reads, in one-letter code: Ribulose bisphosphate carboxylase large chain (453 aa).

Residues 1–2 (MS) constitute a propeptide that is removed on maturation. Proline 3 bears the N-acetylproline mark. Lysine 14 is modified (N6,N6,N6-trimethyllysine). Substrate is bound by residues asparagine 123 and threonine 173. Residue lysine 175 is the Proton acceptor of the active site. A substrate-binding site is contributed by lysine 177. The Mg(2+) site is built by lysine 201, aspartate 203, and glutamate 204. N6-carboxylysine is present on lysine 201. Histidine 294 (proton acceptor) is an active-site residue. Substrate contacts are provided by arginine 295, histidine 327, and serine 379.

This sequence belongs to the RuBisCO large chain family. Type I subfamily. In terms of assembly, heterohexadecamer of 8 large chains and 8 small chains; disulfide-linked. The disulfide link is formed within the large subunit homodimers. Requires Mg(2+) as cofactor. In terms of processing, the disulfide bond which can form in the large chain dimeric partners within the hexadecamer appears to be associated with oxidative stress and protein turnover.

It localises to the plastid. Its subcellular location is the chloroplast. It carries out the reaction 2 (2R)-3-phosphoglycerate + 2 H(+) = D-ribulose 1,5-bisphosphate + CO2 + H2O. The catalysed reaction is D-ribulose 1,5-bisphosphate + O2 = 2-phosphoglycolate + (2R)-3-phosphoglycerate + 2 H(+). Functionally, ruBisCO catalyzes two reactions: the carboxylation of D-ribulose 1,5-bisphosphate, the primary event in carbon dioxide fixation, as well as the oxidative fragmentation of the pentose substrate in the photorespiration process. Both reactions occur simultaneously and in competition at the same active site. The chain is Ribulose bisphosphate carboxylase large chain from Crucianella angustifolia (Narrow-leaved crosswort).